The primary structure comprises 255 residues: MKRLNKLVLGINLLFLVISITAGCGMGKEAEIKKSFEKTLSMYPIKNLEDLYDKEGYRDDQFDKNDKGTWIVRSSMSIQPNGKDMNVKGMVLYMNRNSRTTNGYYYVDVIERQDKGIHRDNEKKYPVKMVDNKIIPTKDIKDENIKKEIENFKFFAQYGSFKDLSKYKEGDISYNPEVPSYSAKYQLTNDDYNVKQLRKRYDIPTNKAPKLLLKGTGNLKGSSVGYKDIEFTFVEKKGENIYFSDSLHLEPSEDK.

The signal sequence occupies residues 1 to 23 (MKRLNKLVLGINLLFLVISITAG). The N-palmitoyl cysteine moiety is linked to residue C24. Residue C24 is the site of S-diacylglycerol cysteine attachment.

Belongs to the staphylococcal tandem lipoprotein family.

The protein resides in the cell membrane. This is an uncharacterized protein from Staphylococcus aureus (strain MRSA252).